The following is a 386-amino-acid chain: NADH kinase pos5, mitochondrial (386 aa).

A mitochondrion-targeting transit peptide spans 1–42 (MIRAANGFRISVRNTAVCLAPNFRQLKGFSIINLGSLQYFRY).

This sequence belongs to the NAD kinase family.

It localises to the mitochondrion. It catalyses the reaction NADH + ATP = ADP + NADPH + H(+). Phosphorylates both NADH and NAD(+), with a preference for NADH. Anti-oxidant factor and key source of the cellular reductant NADPH. This Schizosaccharomyces pombe (strain 972 / ATCC 24843) (Fission yeast) protein is NADH kinase pos5, mitochondrial (pos5).